We begin with the raw amino-acid sequence, 339 residues long: Glycerol-3-phosphate dehydrogenase [NAD(P)+] (339 aa).

Ser-15, Tyr-16, His-36, and Lys-110 together coordinate NADPH. The sn-glycerol 3-phosphate site is built by Lys-110, Gly-139, and Thr-141. NADPH is bound at residue Ala-143. The sn-glycerol 3-phosphate site is built by Lys-195, Asp-248, Ser-258, Arg-259, and Asn-260. Lys-195 acts as the Proton acceptor in catalysis. Residue Arg-259 participates in NADPH binding. NADPH contacts are provided by Val-283 and Glu-285.

Belongs to the NAD-dependent glycerol-3-phosphate dehydrogenase family.

It localises to the cytoplasm. It catalyses the reaction sn-glycerol 3-phosphate + NAD(+) = dihydroxyacetone phosphate + NADH + H(+). The catalysed reaction is sn-glycerol 3-phosphate + NADP(+) = dihydroxyacetone phosphate + NADPH + H(+). The protein operates within membrane lipid metabolism; glycerophospholipid metabolism. In terms of biological role, catalyzes the reduction of the glycolytic intermediate dihydroxyacetone phosphate (DHAP) to sn-glycerol 3-phosphate (G3P), the key precursor for phospholipid synthesis. The protein is Glycerol-3-phosphate dehydrogenase [NAD(P)+] of Klebsiella pneumoniae subsp. pneumoniae (strain ATCC 700721 / MGH 78578).